The sequence spans 494 residues: tRNA-2-methylthio-N(6)-dimethylallyladenosine synthase (494 aa).

The 120-residue stretch at 12–131 (PTYRVVTYGC…LPVLLKRARH (120 aa)) folds into the MTTase N-terminal domain. Cys-21, Cys-60, Cys-94, Cys-168, Cys-172, and Cys-175 together coordinate [4Fe-4S] cluster. A Radical SAM core domain is found at 154–385 (RDSAYSAWVS…ELVDDIAWQE (232 aa)). Residues 387 to 457 (KAQVGRAVEV…PHHLVADGGL (71 aa)) form the TRAM domain.

It belongs to the methylthiotransferase family. MiaB subfamily. Monomer. It depends on [4Fe-4S] cluster as a cofactor.

It localises to the cytoplasm. The catalysed reaction is N(6)-dimethylallyladenosine(37) in tRNA + (sulfur carrier)-SH + AH2 + 2 S-adenosyl-L-methionine = 2-methylsulfanyl-N(6)-dimethylallyladenosine(37) in tRNA + (sulfur carrier)-H + 5'-deoxyadenosine + L-methionine + A + S-adenosyl-L-homocysteine + 2 H(+). Functionally, catalyzes the methylthiolation of N6-(dimethylallyl)adenosine (i(6)A), leading to the formation of 2-methylthio-N6-(dimethylallyl)adenosine (ms(2)i(6)A) at position 37 in tRNAs that read codons beginning with uridine. The protein is tRNA-2-methylthio-N(6)-dimethylallyladenosine synthase of Cutibacterium acnes (strain DSM 16379 / KPA171202) (Propionibacterium acnes).